The primary structure comprises 709 residues: Solute carrier organic anion transporter family member 2B1 (709 aa).

Positions 1–38 (MGPRIGPAGEVPQVPDKETKATMGTENTPGGKASPDPQ) are disordered. The Cytoplasmic segment spans residues 1 to 49 (MGPRIGPAGEVPQVPDKETKATMGTENTPGGKASPDPQDVRPSVFHNIK). Phosphoserine is present on S34. Residues 50-69 (LFVLCHSLLQLAQLMISGYL) traverse the membrane as a helical segment. Residues 51–69 (FVLCHSLLQLAQLMISGYL) form a required for E1S and taurocholate transport; required for transporter stability region. Residues 70–88 (KSSISTVEKRFGLSSQTSG) lie on the Extracellular side of the membrane. The helical transmembrane segment at 89-109 (LLASFNEVGNTALIVFVSYFG) threads the bilayer. The Cytoplasmic segment spans residues 110-115 (SRVHRP). Residues 116-140 (RMIGYGAILVALAGLLMTLPHFISE) form a helical membrane-spanning segment. At 141–185 (PYRYDNTSPEDMPQDFKASLCLPTTSAPASAPSNGNCSSYTETQH) the chain is on the extracellular side. A glycan (N-linked (GlcNAc...) asparagine) is linked at N176. A helical transmembrane segment spans residues 186 to 215 (LSVVGIMFVAQTLLGVGGVPIQPFGISYID). Residues 216–234 (DFAHNSNSPLYLGILFAVT) are Cytoplasmic-facing. The helical transmembrane segment at 235–255 (MMGPGLAFGLGSLMLRLYVDI) threads the bilayer. Over 256 to 273 (NQMPEGGISLTIKDPRWV) the chain is Extracellular. The chain crosses the membrane as a helical span at residues 274 to 298 (GAWWLGFLIAAGAVALAAIPYFFFP). At 299-366 (KEMPKEKREL…IKVFPRVLLQ (68 aa)) the chain is on the cytoplasmic side. A Phosphothreonine modification is found at T318. Residues 319–342 (DSPARKGKDSPSKQSPGESTKKQD) are disordered. S320 is subject to Phosphoserine. Residues 367-388 (TLRHPIFLLVVLSQVCLSSMAA) traverse the membrane as a helical segment. The Extracellular portion of the chain corresponds to 389–408 (GMATFLPKFLERQFSITASY). The chain crosses the membrane as a helical span at residues 409 to 432 (ANLLIGCLSFPSVIVGIVVGGVLV). The Cytoplasmic portion of the chain corresponds to 433–436 (KRLH). The chain crosses the membrane as a helical span at residues 437–460 (LGPVGCGALCLLGMLLCLFFSLPL). Topologically, residues 461–564 (FFIGCSSHQI…STCSHLVVPF (104 aa)) are extracellular. The Kazal-like domain occupies 483–543 (LELSPSCMEA…VFYTNCSCVV (61 aa)). Disulfide bonds link C489–C520, C495–C516, and C504–C541. N538 is a glycosylation site (N-linked (GlcNAc...) asparagine). A helical transmembrane segment spans residues 565 to 587 (LLLVSLGSALACLTHTPSFMLIL). Over 588–596 (RGVKKEDKT) the chain is Cytoplasmic. The chain crosses the membrane as a helical span at residues 597–622 (LAVGIQFMFLRILAWMPSPVIHGSAI). Residues 623-655 (DTTCVHWALSCGRRAVCRYYNNDLLRNRFIGLQ) lie on the Extracellular side of the membrane. A helical membrane pass occupies residues 656 to 673 (FFFKTGSVICFALVLAVL). Residues 674–709 (RQQDKEARTKESRSSPAVEQQLLVSGPGKKPEDSRV) are Cytoplasmic-facing. The tract at residues 679-709 (EARTKESRSSPAVEQQLLVSGPGKKPEDSRV) is disordered.

It belongs to the organo anion transporter (TC 2.A.60) family. As to expression, strongly expressed in the liver, at the sinusoidal membrane of the hepatocytes. Expressed in the kidney. Expressed in placental trophoblasts and syncytiotrophoblast. Expressed in the small intestine. Expressed in the blood-brain barrier, in endothelial cells of brain capillaries. Expressed in the retina, in the inner nuclear layer and the inner plexiform layer. Expressed in skelettal muscles. In testis, primarily localized to the basal membrane of Sertoli cells and weakly expressed within the tubules. Also expressed in pancreas, lung, heart, colon, ovary and spleen. Expressed in fetal brain, heart, kidney, liver, lung, skeletal muscle, spleen and pancreas. In terms of tissue distribution, highest expression in brain. Predominant isoform compared to isoform 3 in small intestine duodenum, kidney, placenta, and skeletal muscle. Predominant isoform compared to isoform 1 in liver. Also expressed in small intestine duodenum, kidney, brain, placenta, and skeletal muscle.

The protein localises to the cell membrane. It localises to the basal cell membrane. The protein resides in the basolateral cell membrane. It is found in the apical cell membrane. It catalyses the reaction dehydroepiandrosterone 3-sulfate(out) = dehydroepiandrosterone 3-sulfate(in). The catalysed reaction is estrone 3-sulfate(out) = estrone 3-sulfate(in). The enzyme catalyses estrone 3-sulfate(out) + hydrogencarbonate(in) = estrone 3-sulfate(in) + hydrogencarbonate(out). It carries out the reaction taurocholate(out) = taurocholate(in). It catalyses the reaction coproporphyrin III(out) = coproporphyrin III(in). The catalysed reaction is substance P(out) = substance P(in). The enzyme catalyses pregnenolone sulfate(out) = pregnenolone sulfate(in). It carries out the reaction prostaglandin E2(out) = prostaglandin E2(in). It catalyses the reaction prostaglandin D2(out) = prostaglandin D2(in). The catalysed reaction is L-thyroxine(out) = L-thyroxine(in). Its activity is regulated as follows. E1S, DHEA-S and PregS transports are regulated by steroid hormones. In the case of testosterone, transport of E1S and DHEA-S was inhibited, whereas progesterone stimulated E1S, DHEA-S and PregS uptake. Progesterone stimulates high-affinity uptake of E1S whereas it inhibits low-affinity uptake of E1S. Progesterone doesn't affect the uptake of PGE2. Its function is as follows. Mediates the Na(+)-independent transport of steroid sulfate conjugates and other specific organic anions. Responsible for the transport of estrone 3-sulfate (E1S) through the basal membrane of syncytiotrophoblast, highlighting a potential role in the placental absorption of fetal-derived sulfated steroids including the steroid hormone precursor dehydroepiandrosterone sulfate (DHEA-S). Also facilitates the uptake of sulfated steroids at the basal/sinusoidal membrane of hepatocytes, therefore accounting for the major part of organic anions clearance of liver. Mediates the intestinal uptake of sulfated steroids. Mediates the uptake of the neurosteroids DHEA-S and pregnenolone sulfate (PregS) into the endothelial cells of the blood-brain barrier as the first step to enter the brain. Also plays a role in the reuptake of neuropeptides such as substance P/TAC1 and vasoactive intestinal peptide/VIP released from retinal neurons. May act as a heme transporter that promotes cellular iron availability via heme oxygenase/HMOX2 and independently of TFRC. Also transports heme by-product coproporphyrin III (CPIII), and may be involved in their hepatic disposition. Mediates the uptake of other substrates such as prostaglandins D2 (PGD2), E1 (PGE1) and E2 (PGE2), taurocholate, L-thyroxine, leukotriene C4 and thromboxane B2. May contribute to regulate the transport of organic compounds in testis across the blood-testis-barrier. Shows a pH-sensitive substrate specificity which may be ascribed to the protonation state of the binding site and leads to a stimulation of substrate transport in an acidic microenvironment. The exact transport mechanism has not been yet deciphered but most likely involves an anion exchange, coupling the cellular uptake of organic substrate with the efflux of an anionic compound. Hydrogencarbonate/HCO3(-) acts as a probable counteranion that exchanges for organic anions. Cytoplasmic glutamate may also act as counteranion in the placenta. An inwardly directed proton gradient has also been proposed as the driving force of E1S uptake with a (H(+):E1S) stoichiometry of (1:1). Has estrone 3-sulfate (E1S) transport activity comparable with the full-length isoform 1. The chain is Solute carrier organic anion transporter family member 2B1 from Homo sapiens (Human).